The chain runs to 322 residues: Carnosine N-methyltransferase 2 (322 aa).

Residue Glu58 participates in substrate binding. Residues Gly90, Glu119, Ser150, and Ile172 each coordinate S-adenosyl-L-methionine. Asn313 provides a ligand contact to substrate.

It belongs to the class I-like SAM-binding methyltransferase superfamily. HNMT family. In terms of assembly, monomer.

The catalysed reaction is carnosine + S-adenosyl-L-methionine = anserine + S-adenosyl-L-homocysteine + H(+). In terms of biological role, N-methyltransferase that mediates the formation of anserine (beta-alanyl-N(Pi)-methyl-L-histidine) from carnosine. Anserine, a methylated derivative of carnosine (beta-alanyl-L-histidine), is an abundant constituent of vertebrate skeletal muscles. The protein is Carnosine N-methyltransferase 2 of Gallus gallus (Chicken).